Consider the following 31-residue polypeptide: Hemocyanin subunit 2 (31 aa).

This sequence belongs to the tyrosinase family. Hemocyanin subfamily. Hemolymph.

It is found in the secreted. It localises to the extracellular space. Its function is as follows. Hemocyanins are copper-containing oxygen carriers occurring freely dissolved in the hemolymph of many mollusks and arthropods. The sequence is that of Hemocyanin subunit 2 from Maja squinado (Mediterranean spider crab).